A 308-amino-acid polypeptide reads, in one-letter code: MSWLEKILEKSNLVSSRKASIPEGVWTKCTSCEQVLYHAELERNLEVCPKCNHHMRMKARRRLETFLDEGERVELGTELEPQDKLKFKDSKRYKERISAAQKSSGEKDALIVMQGELLGMPLVACAFEFSFMGGSMGSVVGARFVKAVEAAIENNCALVCFSASGGARMQEALMSLMQMAKTSAALERLSDKGLPFISVLTDPTMGGVSASLAMLGDINIGEPKALIGFAGRRVIEQTVREDLPEGFQRSEFLLEHGAIDMIVDRREMRQRVGGLVAKLTNHKSPMVVSVNESPNEEPYSVPEADEKG.

The 270-residue stretch at 25-294 (VWTKCTSCEQ…PMVVSVNESP (270 aa)) folds into the CoA carboxyltransferase N-terminal domain. Cysteine 29, cysteine 32, cysteine 48, and cysteine 51 together coordinate Zn(2+). A C4-type zinc finger spans residues 29-51 (CTSCEQVLYHAELERNLEVCPKC). Positions 289-308 (SVNESPNEEPYSVPEADEKG) are disordered.

The protein belongs to the AccD/PCCB family. In terms of assembly, acetyl-CoA carboxylase is a heterohexamer composed of biotin carboxyl carrier protein (AccB), biotin carboxylase (AccC) and two subunits each of ACCase subunit alpha (AccA) and ACCase subunit beta (AccD). The cofactor is Zn(2+).

The protein resides in the cytoplasm. The enzyme catalyses N(6)-carboxybiotinyl-L-lysyl-[protein] + acetyl-CoA = N(6)-biotinyl-L-lysyl-[protein] + malonyl-CoA. Its pathway is lipid metabolism; malonyl-CoA biosynthesis; malonyl-CoA from acetyl-CoA: step 1/1. Component of the acetyl coenzyme A carboxylase (ACC) complex. Biotin carboxylase (BC) catalyzes the carboxylation of biotin on its carrier protein (BCCP) and then the CO(2) group is transferred by the transcarboxylase to acetyl-CoA to form malonyl-CoA. In Vibrio campbellii (strain ATCC BAA-1116), this protein is Acetyl-coenzyme A carboxylase carboxyl transferase subunit beta 1.